The primary structure comprises 78 residues: RNA-binding protein Hfq (78 aa).

The 61-residue stretch at 9–69 folds into the Sm domain; it reads DHFLNQLRKE…ISTFAPQRNV (61 aa).

This sequence belongs to the Hfq family. In terms of assembly, homohexamer.

Functionally, RNA chaperone that binds small regulatory RNA (sRNAs) and mRNAs to facilitate mRNA translational regulation in response to envelope stress, environmental stress and changes in metabolite concentrations. Also binds with high specificity to tRNAs. The protein is RNA-binding protein Hfq of Halalkalibacterium halodurans (strain ATCC BAA-125 / DSM 18197 / FERM 7344 / JCM 9153 / C-125) (Bacillus halodurans).